We begin with the raw amino-acid sequence, 378 residues long: MNIWLSMLTTTGLGAIIGGFTNHLAIKMLFRPHRPIYIGKFQVPFTPGLIPKRRDELAVQLGKMVVEHLLTPEGIGKKLTNEEFQKGLIHWAQVEVDKVITNEQSLRHMLEKWDVAHVEKEATEKIEQVITEKIQAFLEEYYTYTWEQALPHSVHEKIENAIPNVSAFILGRATQFFESEEGKARLSKMIDDFFASRGTLLNLVGMFLGNVSVVDRVQPEVIKFLGQDGTKQLLTEVLQKELEKLKGRDVKEVETFVEKEMIVSSILSAVKVEETVSKFLNQSVQQVCEPVRETIMEKVVPGVVTKGLKWGAENVASILNNLHLAEIVQQEVSTFSTERLEDLVLSITKNELKMITYLGALLGGMIGIVQGLLLLFLK.

2 helical membrane passes run 1 to 21 (MNIW…GGFT) and 357 to 377 (YLGA…LLFL).

The protein belongs to the UPF0754 family.

The protein resides in the cell membrane. This Bacillus cereus (strain AH187) protein is UPF0754 membrane protein BCAH187_A1042.